A 246-amino-acid polypeptide reads, in one-letter code: Trypsin V-B (246 aa).

Positions methionine 1 to alanine 15 are cleaved as a signal peptide. The propeptide at phenylalanine 16–arginine 24 is activation peptide. One can recognise a Peptidase S1 domain in the interval isoleucine 25–alanine 244. Cystine bridges form between cysteine 31/cysteine 160, cysteine 49/cysteine 65, cysteine 133/cysteine 233, cysteine 140/cysteine 206, cysteine 171/cysteine 185, and cysteine 196/cysteine 220. Histidine 64 functions as the Charge relay system in the catalytic mechanism. The Ca(2+) site is built by glutamate 76, asparagine 78, and glutamate 86. The active-site Charge relay system is aspartate 108. Serine 200 serves as the catalytic Charge relay system.

Belongs to the peptidase S1 family. Ca(2+) is required as a cofactor.

Its subcellular location is the secreted. It is found in the extracellular space. It carries out the reaction Preferential cleavage: Arg-|-Xaa, Lys-|-Xaa.. The sequence is that of Trypsin V-B from Rattus norvegicus (Rat).